The sequence spans 215 residues: Large ribosomal subunit protein uL4 (215 aa).

The segment at 46-76 is disordered; that stretch reads TAKSKNRAEVSGGGRKPWAQKGGGRARAGSI. A compositionally biased stretch (gly residues) spans 56–71; that stretch reads SGGGRKPWAQKGGGRA.

It belongs to the universal ribosomal protein uL4 family. Part of the 50S ribosomal subunit.

Its function is as follows. One of the primary rRNA binding proteins, this protein initially binds near the 5'-end of the 23S rRNA. It is important during the early stages of 50S assembly. It makes multiple contacts with different domains of the 23S rRNA in the assembled 50S subunit and ribosome. Functionally, forms part of the polypeptide exit tunnel. This is Large ribosomal subunit protein uL4 from Helicobacter acinonychis (strain Sheeba).